The chain runs to 82 residues: Quinohemoprotein amine dehydrogenase subunit gamma (82 aa).

A cross-link (4-cysteinyl-glutamic acid (Cys-Glu)) is located at residues 7-16; that stretch reads CTTSFDPGWE. 2 cross-links (3-cysteinyl-aspartic acid (Cys-Asp)) span residues 27–33 and 41–49; these read CQPMEAD and CWWPAQVAD. D33 acts as the Proton acceptor in catalysis. The 4'-cysteinyl-tryptophylquinone (Cys-Trp) cross-link spans 37 to 43; that stretch reads CADPCWW. W43 is subject to Tryptophylquinone.

It belongs to the quinohemoprotein amine dehydrogenase subunit gamma family. In terms of assembly, heterotrimer of an alpha, a beta and a gamma subunit. Cysteine tryptophylquinone residue is required as a cofactor. The cysteine tryptophylquinone (CTQ) is generated by oxidation of the indole ring of a tryptophan residue to form tryptophylquinone, followed by covalent cross-linking with a cysteine residue.

It localises to the periplasm. The enzyme catalyses 2 Fe(III)-[cytochrome c550] + an aliphatic amine + H2O = 2 Fe(II)-[cytochrome c550] + an aldehyde + NH4(+) + 2 H(+). Inhibited by carbonyl reagents such as hydrazine, hydroxylamine, phenylhydrazine and semicarbazide. Functionally, catalyzes the oxidative deamination of a wide range of primary aliphatic and aromatic amines. The physiological electron acceptor is the constitutive cytochrome c550. The polypeptide is Quinohemoprotein amine dehydrogenase subunit gamma (qhnDH) (Paracoccus denitrificans).